Consider the following 29-residue polypeptide: Potassium-transporting ATPase KdpF subunit (29 aa).

The chain crosses the membrane as a helical span at residues 2–22 (LIGEAVLAVVTVAVVAYLTYV).

It belongs to the KdpF family. As to quaternary structure, the system is composed of three essential subunits: KdpA, KdpB and KdpC. The complex also contains KdpF, a small non-essential subunit.

The protein localises to the cell membrane. Part of the high-affinity ATP-driven potassium transport (or Kdp) system, which catalyzes the hydrolysis of ATP coupled with the electrogenic transport of potassium into the cytoplasm. This subunit may be involved in stabilization of the complex. The Kdp system is essential for growth under K(+) limitation, and for survival under desiccation and salt crystal inclusion. In Halobacterium salinarum (strain ATCC 29341 / DSM 671 / R1), this protein is Potassium-transporting ATPase KdpF subunit.